Here is a 524-residue protein sequence, read N- to C-terminus: CTP synthase (524 aa).

Positions 1–263 (MKKYVIVTGG…HEKIASKLNV (263 aa)) are amidoligase domain. S13 serves as a coordination point for CTP. Residue S13 coordinates UTP. Residues 14-19 (GIGKGI) and D71 each bind ATP. The Mg(2+) site is built by D71 and E137. CTP is bound by residues 144–146 (DIE), 184–189 (KTKPTQ), and K220. UTP-binding positions include 184 to 189 (KTKPTQ) and K220. The Glutamine amidotransferase type-1 domain maps to 282–524 (RIALVGKYLG…YLRKVLEGSQ (243 aa)). Residue G342 participates in L-glutamine binding. C369 functions as the Nucleophile; for glutamine hydrolysis in the catalytic mechanism. L-glutamine contacts are provided by residues 370–373 (LGMQ), E393, and R451. Residues H499 and E501 contribute to the active site.

It belongs to the CTP synthase family. Homotetramer.

The enzyme catalyses UTP + L-glutamine + ATP + H2O = CTP + L-glutamate + ADP + phosphate + 2 H(+). It carries out the reaction L-glutamine + H2O = L-glutamate + NH4(+). The catalysed reaction is UTP + NH4(+) + ATP = CTP + ADP + phosphate + 2 H(+). It functions in the pathway pyrimidine metabolism; CTP biosynthesis via de novo pathway; CTP from UDP: step 2/2. Its activity is regulated as follows. Allosterically activated by GTP, when glutamine is the substrate; GTP has no effect on the reaction when ammonia is the substrate. The allosteric effector GTP functions by stabilizing the protein conformation that binds the tetrahedral intermediate(s) formed during glutamine hydrolysis. Inhibited by the product CTP, via allosteric rather than competitive inhibition. Functionally, catalyzes the ATP-dependent amination of UTP to CTP with either L-glutamine or ammonia as the source of nitrogen. Regulates intracellular CTP levels through interactions with the four ribonucleotide triphosphates. This chain is CTP synthase, found in Thermotoga maritima (strain ATCC 43589 / DSM 3109 / JCM 10099 / NBRC 100826 / MSB8).